Here is a 197-residue protein sequence, read N- to C-terminus: Holliday junction branch migration complex subunit RuvA (197 aa).

The segment at 1–63 is domain I; the sequence is MYAYLKGIIT…EDAHLLYGFR (63 aa). Residues 64–142 form a domain II region; that stretch reads SEDEKKLFLS…VAGDDLPAKI (79 aa). A flexible linker region spans residues 143–147; that stretch reads AVQAS. Positions 148–197 are domain III; sequence AENQELEEAMEAMLALGYKATELKKIKKFFEGTTDTAENYIKSALKMLVK.

This sequence belongs to the RuvA family. In terms of assembly, homotetramer. Forms an RuvA(8)-RuvB(12)-Holliday junction (HJ) complex. HJ DNA is sandwiched between 2 RuvA tetramers; dsDNA enters through RuvA and exits via RuvB. An RuvB hexamer assembles on each DNA strand where it exits the tetramer. Each RuvB hexamer is contacted by two RuvA subunits (via domain III) on 2 adjacent RuvB subunits; this complex drives branch migration. In the full resolvosome a probable DNA-RuvA(4)-RuvB(12)-RuvC(2) complex forms which resolves the HJ.

Its subcellular location is the cytoplasm. In terms of biological role, the RuvA-RuvB-RuvC complex processes Holliday junction (HJ) DNA during genetic recombination and DNA repair, while the RuvA-RuvB complex plays an important role in the rescue of blocked DNA replication forks via replication fork reversal (RFR). RuvA specifically binds to HJ cruciform DNA, conferring on it an open structure. The RuvB hexamer acts as an ATP-dependent pump, pulling dsDNA into and through the RuvAB complex. HJ branch migration allows RuvC to scan DNA until it finds its consensus sequence, where it cleaves and resolves the cruciform DNA. The sequence is that of Holliday junction branch migration complex subunit RuvA from Streptococcus pneumoniae (strain Taiwan19F-14).